Consider the following 516-residue polypeptide: Polyprenol-phosphate-mannose--protein mannosyltransferase (516 aa).

A compositionally biased stretch (polar residues) spans 1-11 (MTALDTDTPTA). The tract at residues 1–23 (MTALDTDTPTAGRSAPLISPGPV) is disordered. A run of 9 helical transmembrane segments spans residues 113–133 (YNGL…VMLV), 143–163 (STLV…SFVS), 166–186 (TALL…CLMV), 234–254 (WSGL…DAIA), 275–295 (AAYV…APWF), 384–404 (VMLV…GWAL), 413–433 (WRYG…FADI), 437–457 (MYFF…ALIL), and 473–493 (LGLL…AWMY).

Belongs to the glycosyltransferase 39 family.

It localises to the cell membrane. It functions in the pathway protein modification; protein glycosylation. Protein O-mannosyltransferase that catalyzes the transfer of a single mannose residue from a polyprenol phospho-mannosyl lipidic donor to the hydroxyl group of selected serine and threonine residues in acceptor proteins. Involved in DNA conjugation, in at least the recipient strain. In Mycolicibacterium smegmatis (strain MKD8) (Mycobacterium smegmatis), this protein is Polyprenol-phosphate-mannose--protein mannosyltransferase (pmt).